The primary structure comprises 416 residues: Calreticulin (416 aa).

An N-terminal signal peptide occupies residues 1–25; sequence MENRGRNPSFLSLLLLLSLFAIASA. Residue Asn57 is glycosylated (N-linked (GlcNAc...) asparagine). Cys111 and Cys143 form a disulfide bridge. The an alpha-D-glucoside site is built by Tyr115, Lys117, Tyr134, and Asp141. Asn157 carries N-linked (GlcNAc...) asparagine glycosylation. 7 tandem repeats follow at residues 197 to 208, 216 to 227, 233 to 244, 251 to 262, 266 to 276, 280 to 290, and 294 to 304. Positions 197–262 are 4 X approximate repeats; sequence KQTGSLYTDW…EAKKPEDWDD (66 aa). Positions 217–241 are enriched in basic and acidic residues; the sequence is PEAKKPEDWDDKEFIPDPEDKKPEG. Residues 217–281 are disordered; it reads PEAKKPEDWD…TIPNPEYKGP (65 aa). The 3 X approximate repeats stretch occupies residues 266 to 304; sequence GEWTAPTIPNPEYKGPWKAKKIKNPNYKGKWKAPMIDNP. Glu324 contacts an alpha-D-glucoside. Basic and acidic residues predominate over residues 351–381; the sequence is EETWGKQKDAEKAAFEELEKKREEEETKDDP. The segment at 351–416 is disordered; it reads EETWGKQKDA…DKDDDQHDEL (66 aa). Acidic residues predominate over residues 382-400; the sequence is VESDAEDEDEAEADDSDKD. The segment covering 401-416 has biased composition (basic and acidic residues); the sequence is DADKSDDKDDDQHDEL. The Prevents secretion from ER signature appears at 413 to 416; it reads HDEL.

It belongs to the calreticulin family.

Its subcellular location is the endoplasmic reticulum lumen. In terms of biological role, molecular calcium-binding chaperone promoting folding, oligomeric assembly and quality control in the ER via the calreticulin/calnexin cycle. This lectin may interact transiently with almost all of the monoglucosylated glycoproteins that are synthesized in the ER. The sequence is that of Calreticulin from Beta vulgaris (Sugar beet).